The sequence spans 192 residues: E3 ubiquitin-protein ligase RNF183 (192 aa).

The Cytoplasmic portion of the chain corresponds to 1 to 161 (MAEQQGRELE…RECFRNPQFR (161 aa)). An RING-type zinc finger spans residues 13–60 (CPVCWNPFNNTFHTPKMLDCCHSFCVECLAHLSLVTPARRRLLCPLCR). The helical; Anchor for type IV membrane protein transmembrane segment at 162 to 182 (IFAYLMAVILSVTLLLIFSIF) threads the bilayer. The Lumenal segment spans residues 183–192 (WTKQFLWGVG).

Interacts with FATE1. Interacts with SEC16A. Interacts with BCL2L1. Post-translationally, autoubiquitinated (in vitro). As to expression, kidney and testis.

The protein localises to the endoplasmic reticulum membrane. The protein resides in the endoplasmic reticulum. It localises to the golgi apparatus. It is found in the cis-Golgi network membrane. Its subcellular location is the lysosome membrane. The catalysed reaction is S-ubiquitinyl-[E2 ubiquitin-conjugating enzyme]-L-cysteine + [acceptor protein]-L-lysine = [E2 ubiquitin-conjugating enzyme]-L-cysteine + N(6)-ubiquitinyl-[acceptor protein]-L-lysine.. It participates in protein modification; protein ubiquitination. In terms of biological role, acts as an E3 ubiquitin ligase catalyzing the covalent attachment of ubiquitin moieties onto substrate proteins. Triggers apoptosis in response to prolonged ER stress by mediating the polyubiquitination and subsequent proteasomal degradation of BCL2L1. May collaborate with FATE1 to restrain BIK protein levels thus regulating apoptotic signaling. The polypeptide is E3 ubiquitin-protein ligase RNF183 (RNF183) (Homo sapiens (Human)).